The sequence spans 173 residues: Adenine phosphoribosyltransferase (173 aa).

It belongs to the purine/pyrimidine phosphoribosyltransferase family. As to quaternary structure, homodimer.

The protein localises to the cytoplasm. The catalysed reaction is AMP + diphosphate = 5-phospho-alpha-D-ribose 1-diphosphate + adenine. It functions in the pathway purine metabolism; AMP biosynthesis via salvage pathway; AMP from adenine: step 1/1. Its function is as follows. Catalyzes a salvage reaction resulting in the formation of AMP, that is energically less costly than de novo synthesis. This is Adenine phosphoribosyltransferase from Macrococcus caseolyticus (strain JCSC5402) (Macrococcoides caseolyticum).